Consider the following 259-residue polypeptide: Protein-tyrosine phosphatase RolB (259 aa).

The segment at 219 to 259 (GISRPAASSPEPDLTLRLSGPDQEGEEGVMKPAAVNLKKEA) is disordered.

It catalyses the reaction O-phospho-L-tyrosyl-[protein] + H2O = L-tyrosyl-[protein] + phosphate. Its function is as follows. Induces differentiation and growth of neoplastic roots (hairy roots). Seems to function as a tyrosine phosphatase. The polypeptide is Protein-tyrosine phosphatase RolB (rolB) (Rhizobium rhizogenes (Agrobacterium rhizogenes)).